Reading from the N-terminus, the 309-residue chain is MPDTKIVLIAGPTASGKSALALKMARETGGEIVNADSMQIYGGLPVLTAAPSPEELAQAPHHLFGAVDAADAWSVGKWLAAATAVLDDIAARDRTAIVVGGTGLYFRALTHGLADIPPVSETQREVSALLYAAQGEPEFRDVLAALDPEAEARIEIGDRQRLLRAHAVAIATGKSLTAWQTDTKPTLADGTWTGLVLDPPRAQLYDRCDARLGLMVERGALDEVRAMEARGLEPALPALKALGYRELAAHLRGETSLDQALDAARQETRRYAKRQMTWFRNQTPDWERVETLAPYGSLRDRLPPEGEEP.

Residue 11-18 (GPTASGKS) participates in ATP binding. Position 13–18 (13–18 (TASGKS)) interacts with substrate. 2 interaction with substrate tRNA regions span residues 36–39 (DSMQ) and 160–164 (QRLLR).

It belongs to the IPP transferase family. As to quaternary structure, monomer. Mg(2+) is required as a cofactor.

The enzyme catalyses adenosine(37) in tRNA + dimethylallyl diphosphate = N(6)-dimethylallyladenosine(37) in tRNA + diphosphate. Functionally, catalyzes the transfer of a dimethylallyl group onto the adenine at position 37 in tRNAs that read codons beginning with uridine, leading to the formation of N6-(dimethylallyl)adenosine (i(6)A). The protein is tRNA dimethylallyltransferase of Caulobacter sp. (strain K31).